The chain runs to 462 residues: Fumarate hydratase class II (462 aa).

Substrate is bound by residues 98–100 (SGT), R126, 129–132 (HPND), 139–141 (SSN), and T187. Residues 120–141 (GTRGKGRKVHPNDHVNKGQSSN) form a disordered region. H188 (proton donor/acceptor) is an active-site residue. S318 is a catalytic residue. Residues S319 and 324–326 (KVN) each bind substrate.

Belongs to the class-II fumarase/aspartase family. Fumarase subfamily. Homotetramer.

It is found in the cytoplasm. It carries out the reaction (S)-malate = fumarate + H2O. The protein operates within carbohydrate metabolism; tricarboxylic acid cycle; (S)-malate from fumarate: step 1/1. Functionally, involved in the TCA cycle. Catalyzes the stereospecific interconversion of fumarate to L-malate. This chain is Fumarate hydratase class II, found in Nitrosomonas europaea (strain ATCC 19718 / CIP 103999 / KCTC 2705 / NBRC 14298).